The following is a 1530-amino-acid chain: Neurexin-1 (1530 aa).

A signal peptide spans 1–30; that stretch reads MGTALLQRGGCFLLCLSLLLLGCWAELGSG. Positions 31–212 constitute a Laminin G-like 1 domain; sequence LEFPGAEGQW…KLDDEPPNSG (182 aa). Topologically, residues 31-1454 are extracellular; it reads LEFPGAEGQW…EVIRESSSTT (1424 aa). N-linked (GlcNAc...) asparagine glycosylation is found at asparagine 125 and asparagine 190. Residues 199-221 form a disordered region; sequence SGEVKLDDEPPNSGGGSPCEAGE. In terms of domain architecture, EGF-like 1 spans 213 to 256; sequence GGSPCEAGEEGEGGVCLNGGVCSVVDDQAVCDCSRTGFRGKDCS. Cystine bridges form between cysteine 228–cysteine 243 and cysteine 245–cysteine 255. 2 Laminin G-like domains span residues 299–496 and 503–695; these read IATF…AFKC and DPIT…KPSC. Residues aspartate 345, leucine 362, and methionine 430 each contribute to the Ca(2+) site. 5 disulfide bridges follow: cysteine 460–cysteine 496, cysteine 666–cysteine 695, cysteine 703–cysteine 714, cysteine 708–cysteine 723, and cysteine 725–cysteine 735. The EGF-like 2 domain maps to 699–736; sequence TAKPCLSNPCKNNGMCRDGWNRYVCDCSGTGYLGRSCE. A glycan (O-linked (Glc...) serine) is linked at serine 705. 2 consecutive Laminin G-like domains span residues 741–914 and 928–1103; these read VLSY…IDYC and DPVT…ERGC. Ca(2+) contacts are provided by aspartate 788 and leucine 805. Asparagine 813 is a glycosylation site (N-linked (GlcNAc...) asparagine). Residue arginine 864 participates in Ca(2+) binding. Disulfide bonds link cysteine 906–cysteine 914, cysteine 1075–cysteine 1103, cysteine 1110–cysteine 1121, cysteine 1115–cysteine 1130, and cysteine 1132–cysteine 1142. The EGF-like 3 domain occupies 1106–1143; it reads PSTTCQEDSCSNQGVCLQQWDGISCDCSMTSFSGPLCN. A Laminin G-like 6 domain is found at 1149 to 1347; the sequence is YIFSKGGGQI…DANIAIVGNV (199 aa). Ca(2+)-binding residues include aspartate 1199 and valine 1216. The N-linked (GlcNAc...) asparagine glycan is linked to asparagine 1246. Ca(2+) is bound by residues isoleucine 1298 and asparagine 1300. Serine 1408 is a glycosylation site (O-linked (Xyl...) (heparan sulfate) serine). The interval 1411 to 1443 is disordered; the sequence is CPSDDEDIDPCEPSSGGLANPTRAGGREPYPGS. Residues 1455-1475 traverse the membrane as a helical segment; sequence GMVVGIVAAAALCILILLYAM. Over 1476-1530 the chain is Cytoplasmic; the sequence is YKYRNRDEGSYHVDESRNYISNSAQSNGAVVKEKQPSSAKSANKNKKNKDKEYYV. The tract at residues 1497 to 1523 is interaction with CASK; it reads NSAQSNGAVVKEKQPSSAKSANKNKKN. A disordered region spans residues 1497–1530; sequence NSAQSNGAVVKEKQPSSAKSANKNKKNKDKEYYV.

The protein belongs to the neurexin family. Interacts (via laminin G-like domain 2 and/or laminin G-like domain 6) with NLGN1 forming a heterotetramer, where one NLGN1 dimer interacts with one NRXN1 dimer. Also interacts (via laminin G-like domain 2 and/or laminin G-like domain 6) with NLGN2, NLGN3 and NLGN4L; interactions with NLGN1, NLGN2, NLGN3 and NLGN4L are calcium-dependent. Interacts (via cytoplasmic C-terminal region) with CASK (via the PDZ, SH3 and guanylate kinase-like domains). Interacts (via cytoplasmic C-terminus) with CASKIN1 and APBA1. Interacts (via laminin G-like domain 2) with NXPH1 and NXPH3. Alpha-type isoforms (neurexin-1-alpha) interact (via laminin G-like domain 2 and/or laminin G-like domain 6) with DAG1 (via alpha-dystroglycan chain). Interacts with LRRTM1, LRRTM2, LRRTM3 and LRRTM4. Interacts with SYT13 and SYTL1. Interacts with CBLN1, CBLN2 and, less avidly, with CBLN4. Interacts with CLSTN3. Alpha-type isoforms interact with alpha-latrotoxin from spider venom. In terms of processing, O-glycosylated; contains heparan sulfate. Heparan sulfate attachment is required for synapse development by mediating interactions with neuroligins and LRRTM2.

The protein localises to the presynaptic cell membrane. Functionally, cell surface protein involved in cell-cell-interactions, exocytosis of secretory granules and regulation of signal transmission. Function is isoform-specific. Alpha-type isoforms have a long N-terminus with six laminin G-like domains and play an important role in synaptic signal transmission. Alpha-type isoforms play a role in the regulation of calcium channel activity and Ca(2+)-triggered neurotransmitter release at synapses and at neuromuscular junctions. They play an important role in Ca(2+)-triggered exocytosis of secretory granules in pituitary gland. They may affect their functions at synapses and in endocrine cells via their interactions with proteins from the exocytotic machinery. Likewise, alpha-type isoforms play a role in regulating the activity of postsynaptic NMDA receptors, a subtype of glutamate-gated ion channels. Both alpha-type and beta-type isoforms may play a role in the formation or maintenance of synaptic junctions via their interactions (via the extracellular domains) with neuroligin family members, CBLN1 or CBLN2. In vitro, triggers the de novo formation of presynaptic structures. May be involved in specification of excitatory synapses. Alpha-type isoforms were first identified as receptors for alpha-latrotoxin from spider venom. This is Neurexin-1 (NRXN1) from Bos taurus (Bovine).